A 373-amino-acid polypeptide reads, in one-letter code: PqqA peptide cyclase (373 aa).

The region spanning 7-227 (ILNPVGLLAE…EVYAGVIVID (221 aa)) is the Radical SAM core domain. Positions 21, 25, and 28 each coordinate [4Fe-4S] cluster.

It belongs to the radical SAM superfamily. PqqE family. Interacts with PqqD. The interaction is necessary for activity of PqqE. The cofactor is [4Fe-4S] cluster.

The catalysed reaction is [PQQ precursor protein] + S-adenosyl-L-methionine = E-Y cross-linked-[PQQ precursor protein] + 5'-deoxyadenosine + L-methionine + H(+). The protein operates within cofactor biosynthesis; pyrroloquinoline quinone biosynthesis. Functionally, catalyzes the cross-linking of a glutamate residue and a tyrosine residue in the PqqA protein as part of the biosynthesis of pyrroloquinoline quinone (PQQ). The protein is PqqA peptide cyclase of Methylocella silvestris (strain DSM 15510 / CIP 108128 / LMG 27833 / NCIMB 13906 / BL2).